The sequence spans 180 residues: uncharacterized protein (180 aa).

The segment at 1–31 (MSTYEEEHGIQQNSRDYQEVGGTSQEEQRRQ) is disordered. S2 carries the post-translational modification N-acetylserine. The RING-type zinc finger occupies 109-153 (CSICYTNYLEDEYPLVVELPHCHHKFDLECLSVWLSRSTTCPLCR).

This is an uncharacterized protein from Saccharomyces cerevisiae (strain ATCC 204508 / S288c) (Baker's yeast).